We begin with the raw amino-acid sequence, 308 residues long: UDP-N-acetylenolpyruvoylglucosamine reductase (308 aa).

In terms of domain architecture, FAD-binding PCMH-type spans 32–196; it reads VGGPAARLYK…ISAKLQLSPG (165 aa). Arg176 is an active-site residue. Residue Ser225 is the Proton donor of the active site. Residue Glu296 is part of the active site.

Belongs to the MurB family. The cofactor is FAD.

It localises to the cytoplasm. The enzyme catalyses UDP-N-acetyl-alpha-D-muramate + NADP(+) = UDP-N-acetyl-3-O-(1-carboxyvinyl)-alpha-D-glucosamine + NADPH + H(+). The protein operates within cell wall biogenesis; peptidoglycan biosynthesis. Its function is as follows. Cell wall formation. This Legionella pneumophila (strain Lens) protein is UDP-N-acetylenolpyruvoylglucosamine reductase.